The primary structure comprises 127 residues: Putative 2Fe-2S ferredoxin (127 aa).

Positions 23, 54, and 58 each coordinate [2Fe-2S] cluster.

This sequence belongs to the 2Fe2S Shethna-type ferredoxin family. The cofactor is [2Fe-2S] cluster.

In terms of biological role, ferredoxins are iron-sulfur proteins that transfer electrons in a wide variety of metabolic reactions. This chain is Putative 2Fe-2S ferredoxin (cbiW), found in Priestia megaterium (Bacillus megaterium).